The primary structure comprises 162 residues: Small ribosomal subunit protein uS9 (162 aa).

The protein belongs to the universal ribosomal protein uS9 family.

The polypeptide is Small ribosomal subunit protein uS9 (Methylobacterium sp. (strain 4-46)).